The primary structure comprises 541 residues: Ankyrin repeat domain-containing protein 13C (541 aa).

Over residues methionine 1–glycine 20 the composition is skewed to basic and acidic residues. Positions methionine 1–lysine 53 are disordered. Acidic residues predominate over residues aspartate 21–alanine 30. Positions alanine 37 to glycine 52 are enriched in gly residues. ANK repeat units follow at residues proline 111–asparagine 142, histidine 143–valine 172, and glutamine 176–arginine 205. A Phosphoserine modification is found at serine 411.

It localises to the endoplasmic reticulum membrane. Functionally, acts as a molecular chaperone for G protein-coupled receptors, regulating their biogenesis and exit from the ER. This chain is Ankyrin repeat domain-containing protein 13C (Ankrd13c), found in Mus musculus (Mouse).